The chain runs to 187 residues: Ribosome-recycling factor (187 aa).

Belongs to the RRF family.

It is found in the cytoplasm. Responsible for the release of ribosomes from messenger RNA at the termination of protein biosynthesis. May increase the efficiency of translation by recycling ribosomes from one round of translation to another. The sequence is that of Ribosome-recycling factor from Flavobacterium psychrophilum (strain ATCC 49511 / DSM 21280 / CIP 103535 / JIP02/86).